A 341-amino-acid chain; its full sequence is Glycerol-3-phosphate dehydrogenase [NAD(P)+] (341 aa).

Residues Ser-14, Phe-15, Arg-35, and Lys-108 each coordinate NADPH. Sn-glycerol 3-phosphate contacts are provided by Lys-108 and Gly-136. Ala-140 provides a ligand contact to NADPH. Positions 191, 244, 254, 255, and 256 each coordinate sn-glycerol 3-phosphate. Residue Lys-191 is the Proton acceptor of the active site. Arg-255 is an NADPH binding site. Residues Val-279 and Glu-281 each contribute to the NADPH site.

This sequence belongs to the NAD-dependent glycerol-3-phosphate dehydrogenase family.

Its subcellular location is the cytoplasm. The enzyme catalyses sn-glycerol 3-phosphate + NAD(+) = dihydroxyacetone phosphate + NADH + H(+). It carries out the reaction sn-glycerol 3-phosphate + NADP(+) = dihydroxyacetone phosphate + NADPH + H(+). It functions in the pathway membrane lipid metabolism; glycerophospholipid metabolism. Its function is as follows. Catalyzes the reduction of the glycolytic intermediate dihydroxyacetone phosphate (DHAP) to sn-glycerol 3-phosphate (G3P), the key precursor for phospholipid synthesis. The chain is Glycerol-3-phosphate dehydrogenase [NAD(P)+] from Pseudomonas entomophila (strain L48).